Consider the following 537-residue polypeptide: Putative cysteine ligase BshC (537 aa).

Positions I422–I450 form a coiled coil.

Belongs to the BshC family.

Involved in bacillithiol (BSH) biosynthesis. May catalyze the last step of the pathway, the addition of cysteine to glucosamine malate (GlcN-Mal) to generate BSH. This is Putative cysteine ligase BshC from Staphylococcus aureus (strain USA300).